Reading from the N-terminus, the 180-residue chain is Large ribosomal subunit protein uL5c (180 aa).

This sequence belongs to the universal ribosomal protein uL5 family. Part of the 50S ribosomal subunit; contacts the 5S rRNA.

The protein localises to the plastid. It localises to the chloroplast. Binds 5S rRNA, forms part of the central protuberance of the 50S subunit. The chain is Large ribosomal subunit protein uL5c (rpl5) from Chlorella vulgaris (Green alga).